The following is a 320-amino-acid chain: Ferrochelatase (320 aa).

2 residues coordinate Fe cation: histidine 194 and glutamate 275.

The protein belongs to the ferrochelatase family.

The protein localises to the cytoplasm. It catalyses the reaction heme b + 2 H(+) = protoporphyrin IX + Fe(2+). The protein operates within porphyrin-containing compound metabolism; protoheme biosynthesis; protoheme from protoporphyrin-IX: step 1/1. Catalyzes the ferrous insertion into protoporphyrin IX. In Vibrio cholerae serotype O1 (strain ATCC 39315 / El Tor Inaba N16961), this protein is Ferrochelatase.